We begin with the raw amino-acid sequence, 287 residues long: PPP2R1A-PPP2R2A-interacting phosphatase regulator 1 (287 aa).

Residues Met-1 to Leu-44 are disordered. Positions Gly-15–Leu-32 are enriched in gly residues. A Phosphoserine modification is found at Ser-35. Ser-37 bears the Phosphoserine; by CHEK1 mark. Residue Ser-45 is modified to Phosphoserine. Thr-47 carries the post-translational modification Phosphothreonine. A phosphoserine mark is found at Ser-48, Ser-62, and Ser-76. A Glycyl lysine isopeptide (Lys-Gly) (interchain with G-Cter in SUMO1) cross-link involves residue Lys-89. Phosphoserine is present on residues Ser-143 and Ser-147. Thr-149 carries the phosphothreonine modification. 2 disordered regions span residues Ser-167–Ser-189 and Gly-236–Lys-287. Low complexity-rich tracts occupy residues Pro-178 to Ser-189 and Gly-246 to Ser-257. Residues Ser-187 and Ser-189 each carry the phosphoserine modification. Residues Ala-259–Ser-270 show a composition bias toward polar residues. Phosphoserine is present on residues Ser-267, Ser-270, and Ser-276.

Belongs to the FAM122 family. As to quaternary structure, interacts with PPP2CA and PPP2R1A. Interacts (via its N-terminus) with PPP2R2A; the interaction is direct and this interaction inhibits PP2A activity. The CHEK1-mediated Ser-37 phosphorylated form interacts with 14-3-3 proteins. In terms of processing, CHEK1-mediated phosphorylation at Ser-37 negatively regulates its ability to inhibit serine/threonine-protein phosphatase 2A (PP2A) activity. Phosphorylation leads to its release from the PP2A complex and its sequestration by 14-3-3 proteins in the cytoplasm resulting in its inability to translocate to the nucleus, where it otherwise inhibits PP2A.

The protein resides in the nucleus. It is found in the cytoplasm. Acts as an inhibitor of serine/threonine-protein phosphatase 2A (PP2A) activity. Inhibits PP2A activity by blocking the substrate binding site on PPP2R2A and the active site of PPP2CA. Potentiates ubiquitin-mediated proteasomal degradation of serine/threonine-protein phosphatase 2A catalytic subunit alpha (PPP2CA). Inhibits PP2A-mediated dephosphorylation of WEE1, promoting ubiquitin-mediated proteolysis of WEE1, thereby releasing G2/M checkpoint. The protein is PPP2R1A-PPP2R2A-interacting phosphatase regulator 1 of Homo sapiens (Human).